Reading from the N-terminus, the 886-residue chain is Adhesion G protein-coupled receptor E1 (886 aa).

A signal peptide spans 1 to 20 (MRGFNLLLFWGCCVMHSWEG). The Extracellular segment spans residues 21-599 (HIRPTRKPNT…IMASGELTMD (579 aa)). Positions 31-79 (KGNNCRDSTLCPAYATCTNTVDSYYCACKQGFLSSNGQNHFKDPGVRCK) constitute an EGF-like 1 domain. Intrachain disulfides connect C35–C47, C41–C56, C58–C78, C84–C97, C91–C106, C108–C130, C136–C148, C142–C157, C159–C170, C176–C188, C182–C197, C199–C219, C225–C235, C229–C244, C246–C266, C272–C285, C279–C294, and C296–C315. The region spanning 80–131 (DIDECSQSPQPCGPNSSCKNLSGRYKCSCLDGFSSPTGNDWVPGKPGNFSCT) is the EGF-like 2; calcium-binding domain. 3 N-linked (GlcNAc...) asparagine glycosylation sites follow: N94, N99, and N127. The 40-residue stretch at 132-171 (DINECLTSSVCPEHSDCVNSMGSYSCSCQVGFISRNSTCE) folds into the EGF-like 3; calcium-binding domain. N-linked (GlcNAc...) asparagine glycosylation is present at N167. One can recognise an EGF-like 4; calcium-binding domain in the interval 172 to 220 (DVDECADPRACPEHATCNNTVGNYSCFCNPGFESSSGHLSFQGLKASCE). N-linked (GlcNAc...) asparagine glycans are attached at residues N189 and N194. Positions 221–267 (DIDECTEMCPINSTCTNTPGSYFCTCHPGFAPSNGQLNFTDQGVECR) constitute an EGF-like 5; calcium-binding domain. Residues N232 and N258 are each glycosylated (N-linked (GlcNAc...) asparagine). Residues 268–316 (DIDECRQDPSTCGPNSICTNALGSYSCGCIAGFHPNPEGSQKDGNFSCQ) form the EGF-like 6; calcium-binding domain. Residues N312, N366, N375, and N448 are each glycosylated (N-linked (GlcNAc...) asparagine). In terms of domain architecture, GAIN-B spans 431–597 (EYLDIESKVI…AVIMASGELT (167 aa)). 2 disulfides stabilise this stretch: C550/C579 and C567/C581. A GPS region spans residues 550–597 (CVSWSTDVKGGRWTSFGCVILEASETYTICSCNQMANLAVIMASGELT). Residues 600-627 (FSLYIISHVGIIISLVCLVLAIATFLLC) traverse the membrane as a helical segment. The Cytoplasmic segment spans residues 628 to 634 (RSIRNHN). The helical transmembrane segment at 635–656 (TYLHLHLCVCLLLAKTLFLAGI) threads the bilayer. Over 657-666 (HKTDNKMGCA) the chain is Extracellular. The helical transmembrane segment at 667 to 690 (IIAGFLHYLFLACFFWMLVEAVIL) threads the bilayer. Residues 691–709 (FLMVRNLKVVNYFSSRNIK) lie on the Cytoplasmic side of the membrane. Residues 710–731 (MLHICAFGYGLPMLVVVISASV) form a helical membrane-spanning segment. Topologically, residues 732 to 747 (QPQGYGMHNRCWLNTE) are extracellular. The helical transmembrane segment at 748 to 776 (TGFIWSFLGPVCTVIVINSLLLTWTLWIL) threads the bilayer. Topologically, residues 777–794 (RQRLSSVNAEVSTLKDTR) are cytoplasmic. Residues 795 to 814 (LLTFKAFAQLFILGCSWVLG) form a helical membrane-spanning segment. The Extracellular segment spans residues 815–829 (IFQIGPVAGVMAYLF). A helical membrane pass occupies residues 830 to 852 (TIINSLQGAFIFLIHCLLNGQVR). At 853–886 (EEYKRWITGKTKPSSQSQTSRILLSSMPSASKTG) the chain is on the cytoplasmic side. Positions 862–886 (KTKPSSQSQTSRILLSSMPSASKTG) are disordered. The segment covering 863–886 (TKPSSQSQTSRILLSSMPSASKTG) has biased composition (polar residues).

This sequence belongs to the G-protein coupled receptor 2 family. Adhesion G-protein coupled receptor (ADGR) subfamily. In terms of tissue distribution, expression is restricted to eosinophils.

Its subcellular location is the cell membrane. Orphan receptor involved in cell adhesion and probably in cell-cell interactions specifically involving cells of the immune system. May play a role in regulatory T-cells (Treg) development. This is Adhesion G protein-coupled receptor E1 from Homo sapiens (Human).